Reading from the N-terminus, the 89-residue chain is Small ribosomal subunit protein uS15 (89 aa).

This sequence belongs to the universal ribosomal protein uS15 family. As to quaternary structure, part of the 30S ribosomal subunit. Forms a bridge to the 50S subunit in the 70S ribosome, contacting the 23S rRNA.

In terms of biological role, one of the primary rRNA binding proteins, it binds directly to 16S rRNA where it helps nucleate assembly of the platform of the 30S subunit by binding and bridging several RNA helices of the 16S rRNA. Forms an intersubunit bridge (bridge B4) with the 23S rRNA of the 50S subunit in the ribosome. This is Small ribosomal subunit protein uS15 from Streptococcus pyogenes serotype M1.